Consider the following 258-residue polypeptide: Indole-3-glycerol phosphate synthase (258 aa).

The protein belongs to the TrpC family.

It carries out the reaction 1-(2-carboxyphenylamino)-1-deoxy-D-ribulose 5-phosphate + H(+) = (1S,2R)-1-C-(indol-3-yl)glycerol 3-phosphate + CO2 + H2O. Its pathway is amino-acid biosynthesis; L-tryptophan biosynthesis; L-tryptophan from chorismate: step 4/5. The polypeptide is Indole-3-glycerol phosphate synthase (Endomicrobium trichonymphae).